An 806-amino-acid chain; its full sequence is Minor extracellular protease Vpr (806 aa).

An N-terminal signal peptide occupies residues 1 to 28 (MKKGIIRFLLVSFVLFFALSTGITGVQA). Residues 29–160 (APASSKTSAD…TISEDAVSPQ (132 aa)) constitute a propeptide that is removed on maturation. Positions 57 to 142 (TVIVELKEKS…AVYPNVTYKT (86 aa)) constitute an Inhibitor I9 domain. The Peptidase S8 domain occupies 158 to 597 (SPQMDDSAPY…ARIMNAIKAD (440 aa)). Catalysis depends on charge relay system residues aspartate 189 and histidine 233. Residues 383–461 (ELVEAGIGEA…KLSLEDGEKL (79 aa)) enclose the PA domain. The active-site Charge relay system is serine 534.

It belongs to the peptidase S8 family. Probably undergoes C-terminal processing or proteolysis. Auto-processed to form active enzymes of several different molecular weights.

Its subcellular location is the secreted. It is found in the cell wall. Its activity is regulated as follows. Activity is inhibited by phenylmethylsulfonyl fluoride (PMSF), but not by EDTA. Its function is as follows. Serine protease. Involved in the production of the competence and sporulation stimulating factor CSF. Is directly involved in the processing of pro-CSF to CSF. Can also cleave pro-PhrA to PhrA, but cannot cleave pro-PhrE. Shows fibrinolytic activity in vitro. Not essential for growth or sporulation. The sequence is that of Minor extracellular protease Vpr from Bacillus subtilis (strain 168).